Consider the following 311-residue polypeptide: D-allose-binding periplasmic protein (311 aa).

An N-terminal signal peptide occupies residues 1–23; it reads MNKYLKYFSGTLVGLMLSTSAFA.

Belongs to the bacterial solute-binding protein 2 family.

Its subcellular location is the periplasm. Its function is as follows. Part of the binding-protein-dependent transport system AlsBAC for D-allose. The polypeptide is D-allose-binding periplasmic protein (alsB) (Escherichia coli (strain K12)).